The sequence spans 149 residues: Transcription antitermination protein NusB (149 aa).

It belongs to the NusB family.

Involved in transcription antitermination. Required for transcription of ribosomal RNA (rRNA) genes. Binds specifically to the boxA antiterminator sequence of the ribosomal RNA (rrn) operons. The polypeptide is Transcription antitermination protein NusB (Chromobacterium violaceum (strain ATCC 12472 / DSM 30191 / JCM 1249 / CCUG 213 / NBRC 12614 / NCIMB 9131 / NCTC 9757 / MK)).